The following is a 1370-amino-acid chain: DNA-directed RNA polymerase subunit beta (1370 aa).

Belongs to the RNA polymerase beta chain family. The RNAP catalytic core consists of 2 alpha, 1 beta, 1 beta' and 1 omega subunit. When a sigma factor is associated with the core the holoenzyme is formed, which can initiate transcription.

The enzyme catalyses RNA(n) + a ribonucleoside 5'-triphosphate = RNA(n+1) + diphosphate. Functionally, DNA-dependent RNA polymerase catalyzes the transcription of DNA into RNA using the four ribonucleoside triphosphates as substrates. The chain is DNA-directed RNA polymerase subunit beta from Geobacter sulfurreducens (strain ATCC 51573 / DSM 12127 / PCA).